The sequence spans 653 residues: Acetyl-coenzyme A synthetase 1 (653 aa).

Residues 191–194 (RGGR), threonine 311, and asparagine 335 each bind CoA. Residues 387–389 (GEP), 411–416 (DTWWQT), aspartate 500, and arginine 515 contribute to the ATP site. CoA is bound at residue serine 523. Arginine 526 is an ATP binding site. The Mg(2+) site is built by valine 537, histidine 539, and valine 542. Arginine 584 lines the CoA pocket. Position 609 is an N6-acetyllysine (lysine 609).

It belongs to the ATP-dependent AMP-binding enzyme family. Mg(2+) serves as cofactor. Acetylated. Deacetylation by the SIR2-homolog deacetylase activates the enzyme.

The catalysed reaction is acetate + ATP + CoA = acetyl-CoA + AMP + diphosphate. Catalyzes the conversion of acetate into acetyl-CoA (AcCoA), an essential intermediate at the junction of anabolic and catabolic pathways. AcsA undergoes a two-step reaction. In the first half reaction, AcsA combines acetate with ATP to form acetyl-adenylate (AcAMP) intermediate. In the second half reaction, it can then transfer the acetyl group from AcAMP to the sulfhydryl group of CoA, forming the product AcCoA. The sequence is that of Acetyl-coenzyme A synthetase 1 from Pseudomonas putida (strain ATCC 47054 / DSM 6125 / CFBP 8728 / NCIMB 11950 / KT2440).